An 810-amino-acid polypeptide reads, in one-letter code: Probable dehydratase YbiW (810 aa).

The PFL domain occupies 11–682 (DRIKAHKNAL…QTMATPDGRK (672 aa)). The tract at residues 677–699 (TPDGRKAHTPLAEGASPASGTDH) is disordered. The Glycine radical domain occupies 689 to 810 (EGASPASGTD…DIIARTEHML (122 aa)). Gly-786 carries the post-translational modification Glycine radical.

The protein belongs to the glycyl radical enzyme (GRE) family.

Its function is as follows. Probably shows dehydratase activity. This chain is Probable dehydratase YbiW (ybiW), found in Escherichia coli (strain K12).